Here is a 211-residue protein sequence, read N- to C-terminus: Transmembrane protein 247 (211 aa).

2 stretches are compositionally biased toward basic and acidic residues: residues Met1–Glu10 and Pro31–Lys45. The disordered stretch occupies residues Met1 to Val90. The span at Pro63–Ser73 shows a compositional bias: pro residues. The stretch at Lys119–Leu148 forms a coiled coil. The next 2 membrane-spanning stretches (helical) occupy residues Leu159–Ile179 and Val186–Ile206.

It localises to the membrane. The chain is Transmembrane protein 247 (Tmem247) from Mus musculus (Mouse).